The chain runs to 634 residues: Tyrosine-protein kinase transforming protein erbB (634 aa).

The Protein kinase domain occupies 132 to 399 (FKKVKVLGSG…KMARDPPRYL (268 aa)). ATP is bound by residues 138–146 (LGSGAFGTV) and Lys-165. Asp-257 functions as the Proton acceptor in the catalytic mechanism.

The protein belongs to the protein kinase superfamily. Tyr protein kinase family. EGF receptor subfamily.

The enzyme catalyses L-tyrosyl-[protein] + ATP = O-phospho-L-tyrosyl-[protein] + ADP + H(+). The sequence is that of Tyrosine-protein kinase transforming protein erbB (V-ERBB) from Avian leukosis virus (ALV).